Reading from the N-terminus, the 372-residue chain is Aminomethyltransferase (372 aa).

It belongs to the GcvT family. As to quaternary structure, the glycine cleavage system is composed of four proteins: P, T, L and H.

The catalysed reaction is N(6)-[(R)-S(8)-aminomethyldihydrolipoyl]-L-lysyl-[protein] + (6S)-5,6,7,8-tetrahydrofolate = N(6)-[(R)-dihydrolipoyl]-L-lysyl-[protein] + (6R)-5,10-methylene-5,6,7,8-tetrahydrofolate + NH4(+). Its function is as follows. The glycine cleavage system catalyzes the degradation of glycine. The sequence is that of Aminomethyltransferase from Burkholderia ambifaria (strain MC40-6).